We begin with the raw amino-acid sequence, 544 residues long: CTP synthase (544 aa).

The amidoligase domain stretch occupies residues 1–267; it reads MAKFVFVTGG…CRQVLDVLSL (267 aa). Ser13 serves as a coordination point for CTP. Position 13 (Ser13) interacts with UTP. ATP is bound by residues 14 to 19 and Asp71; that span reads SIGKGI. Mg(2+)-binding residues include Asp71 and Glu141. CTP contacts are provided by residues 148–150, 188–193, and Lys224; these read DIE and KTKPTQ. UTP is bound by residues 188–193 and Lys224; that span reads KTKPTQ. In terms of domain architecture, Glutamine amidotransferase type-1 spans 292–534; it reads KVALVGKYVQ…IQAASQRLPQ (243 aa). L-glutamine is bound at residue Gly354. Catalysis depends on Cys381, which acts as the Nucleophile; for glutamine hydrolysis. L-glutamine is bound by residues 382 to 385, Glu405, and Arg462; that span reads LGMQ. Residues His507 and Glu509 contribute to the active site.

Belongs to the CTP synthase family. In terms of assembly, homotetramer.

It carries out the reaction UTP + L-glutamine + ATP + H2O = CTP + L-glutamate + ADP + phosphate + 2 H(+). The enzyme catalyses L-glutamine + H2O = L-glutamate + NH4(+). It catalyses the reaction UTP + NH4(+) + ATP = CTP + ADP + phosphate + 2 H(+). It participates in pyrimidine metabolism; CTP biosynthesis via de novo pathway; CTP from UDP: step 2/2. Its activity is regulated as follows. Allosterically activated by GTP, when glutamine is the substrate; GTP has no effect on the reaction when ammonia is the substrate. The allosteric effector GTP functions by stabilizing the protein conformation that binds the tetrahedral intermediate(s) formed during glutamine hydrolysis. Inhibited by the product CTP, via allosteric rather than competitive inhibition. Catalyzes the ATP-dependent amination of UTP to CTP with either L-glutamine or ammonia as the source of nitrogen. Regulates intracellular CTP levels through interactions with the four ribonucleotide triphosphates. The protein is CTP synthase of Synechococcus sp. (strain RCC307).